We begin with the raw amino-acid sequence, 1669 residues long: Collagen alpha-1(IV) chain (1669 aa).

An N-terminal signal peptide occupies residues 1-27; the sequence is MGPRLSVWLLLLFAALLLHEERSRAAA. Residues 28 to 172 constitute a propeptide, N-terminal propeptide (7S domain); that stretch reads KGDCGGSGCG…LGHVPGTLLK (145 aa). Residues 47-1443 are disordered; that stretch reads QKGERGLPGL…MGPPGTPSVD (1397 aa). Residues 92–104 show a composition bias toward low complexity; sequence TRGPPGAAGYPGN. Residue asparagine 126 is glycosylated (N-linked (GlcNAc...) asparagine). Positions 173-1440 are triple-helical region; it reads GERGFPGIPG…PGSMGPPGTP (1268 aa). A compositionally biased stretch (pro residues) spans 196-214; sequence VGPPGFTGPPGPPGPPGPP. 3-hydroxyproline occurs at positions 204, 207, and 210. Residues 234–247 are compositionally biased toward low complexity; sequence QGVSGPPGVPGQAQ. Over residues 289–298 the composition is skewed to basic and acidic residues; sequence PGKDGEKGER. Pro residues predominate over residues 367-376; sequence PGQPGPPGFP. Over residues 377–387 the composition is skewed to low complexity; sequence TPGQAGAPGFP. Pro residues-rich tracts occupy residues 413-424 and 436-448; these read PGPPGPPGPPGQ and PGPP…PGTP. Residues 485 to 494 are compositionally biased toward low complexity; the sequence is PGEIGFPGQP. Composition is skewed to basic and acidic residues over residues 497 to 508 and 535 to 545; these read KGDRGLPGRDGL and FDMRLKGDKGD. The span at 586 to 595 shows a compositional bias: gly residues; that stretch reads GPPGGVGFPG. 3-hydroxyproline occurs at positions 587 and 602. Proline 603 carries the post-translational modification 4-hydroxyproline. Proline 605 bears the 3-hydroxyproline mark. Proline 606 carries the 4-hydroxyproline modification. The segment covering 611-620 has biased composition (low complexity); that stretch reads IGPVGEKGQA. The segment covering 621-630 has biased composition (gly residues); it reads GFPGGPGSPG. A 4-hydroxyproline mark is found at proline 623, proline 626, proline 629, and proline 632. Proline 647 carries the post-translational modification 3-hydroxyproline. Low complexity predominate over residues 715 to 731; that stretch reads RPGFNGLPGNPGPQGQK. Residues 758–767 are compositionally biased toward gly residues; it reads GSIGGPGVPG. Over residues 784–802 the composition is skewed to pro residues; sequence PGPPGVQGPAGPPGVPGIG. A compositionally biased stretch (gly residues) spans 803–817; sequence PPGAMGPPGGQGPPG. 2 stretches are compositionally biased toward low complexity: residues 847 to 875 and 994 to 1003; these read SQGL…PGFP and DPGLSGTPGS. Gly residues predominate over residues 1011–1020; sequence GSVGGMGLPG. Proline 1214 carries the post-translational modification 3-hydroxyproline. The span at 1220–1230 shows a compositional bias: low complexity; it reads QPGLPGTPGHP. A compositionally biased stretch (pro residues) spans 1247-1258; it reads PGHPGPMGPPGF. A compositionally biased stretch (gly residues) spans 1290 to 1299; the sequence is GMPGIGGSPG. 3 stretches are compositionally biased toward low complexity: residues 1333 to 1343, 1368 to 1391, and 1398 to 1412; these read DQGVPGPKGLQ, PGLK…SVGL, and PGFD…ETGP. The segment covering 1413–1428 has biased composition (pro residues); sequence FGPPGPRGFPGPPGPD. Position 1424 is a 3-hydroxyproline (proline 1424). Residues 1445 to 1669 form the Collagen IV NC1 domain; it reads GFLVTRHSQT…SRCQVCMRRT (225 aa). Disulfide bonds link cysteine 1460–cysteine 1551, cysteine 1493–cysteine 1548, cysteine 1505–cysteine 1511, cysteine 1570–cysteine 1665, cysteine 1604–cysteine 1662, and cysteine 1616–cysteine 1622. An S-Lysyl-methionine sulfilimine (Met-Lys) (interchain with K-1651) cross-link involves residue methionine 1533. Lysine 1651 participates in a covalent cross-link: S-Lysyl-methionine sulfilimine (Lys-Met) (interchain with M-1533).

The protein belongs to the type IV collagen family. In terms of assembly, there are six type IV collagen isoforms, alpha 1(IV)-alpha 6(IV), each of which can form a triple helix structure with 2 other chains to generate type IV collagen network. Interacts with EFEMP2. Lysines at the third position of the tripeptide repeating unit (G-X-Y) are hydroxylated. The modified lysines can be O-glycosylated. Post-translationally, contains 4-hydroxyproline. Prolines at the third position of the tripeptide repeating unit (G-X-Y) are hydroxylated in some or all of the chains. In terms of processing, contains 3-hydroxyproline. This modification occurs on the first proline residue in the sequence motif Gly-Pro-Hyp, where Hyp is 4-hydroxyproline. Type IV collagens contain numerous cysteine residues which are involved in inter- and intramolecular disulfide bonding. 12 of these, located in the NC1 domain, are conserved in all known type IV collagens. Post-translationally, the trimeric structure of the NC1 domains is stabilized by covalent bonds (sulfilimine cross-links) between Lys and Met residues. These cross-links are important for the mechanical stability of the basement membrane. Sulfilimine cross-link is catalyzed by PXDN. In terms of processing, proteolytic processing produces the C-terminal NC1 peptide, arresten. As to expression, detected in the basement membrane of the cornea (at protein level).

Its subcellular location is the secreted. The protein localises to the extracellular space. The protein resides in the extracellular matrix. It localises to the basement membrane. Functionally, type IV collagen is the major structural component of glomerular basement membranes (GBM), forming a 'chicken-wire' meshwork together with laminins, proteoglycans and entactin/nidogen. In terms of biological role, arresten, comprising the C-terminal NC1 domain, inhibits angiogenesis and tumor formation. The C-terminal half is found to possess the anti-angiogenic activity. Specifically inhibits endothelial cell proliferation, migration and tube formation. In Mus musculus (Mouse), this protein is Collagen alpha-1(IV) chain.